Reading from the N-terminus, the 169-residue chain is Ribosome maturation factor RimM (169 aa).

In terms of domain architecture, PRC barrel spans 94-168 (DDEFYHADLI…RIVADPPEGL (75 aa)).

The protein belongs to the RimM family. In terms of assembly, binds ribosomal protein uS19.

Its subcellular location is the cytoplasm. Functionally, an accessory protein needed during the final step in the assembly of 30S ribosomal subunit, possibly for assembly of the head region. Essential for efficient processing of 16S rRNA. May be needed both before and after RbfA during the maturation of 16S rRNA. It has affinity for free ribosomal 30S subunits but not for 70S ribosomes. The sequence is that of Ribosome maturation factor RimM from Cereibacter sphaeroides (strain ATCC 17029 / ATH 2.4.9) (Rhodobacter sphaeroides).